A 108-amino-acid polypeptide reads, in one-letter code: Transcriptional activator HlyU (108 aa).

The region spanning 13-107 (EMEKNSAKAV…LLHRLYCQAN (95 aa)) is the HTH arsR-type domain. A DNA-binding region (H-T-H motif) is located at residues 47–66 (VGELSSRLELSQSALSQHLA).

Up-regulates the expression of the hemolysin gene, hlyA, and may promote expression of other virulence determinants in vivo. It may have both positive and negative regulator activities. In Vibrio cholerae serotype O1 (strain ATCC 39315 / El Tor Inaba N16961), this protein is Transcriptional activator HlyU (hlyU).